Consider the following 168-residue polypeptide: Secreted RxLR effector protein RXLR-C06 (168 aa).

Positions 1–22 are cleaved as a signal peptide; the sequence is MRIQLLWLSFAVLSTILSTCDA. Residues 25-52 are disordered; the sequence is DKLDPQRVQPNQNGSGHNQSIRSALKTS. Polar residues predominate over residues 32–50; sequence VQPNQNGSGHNQSIRSALK. N-linked (GlcNAc...) asparagine glycosylation is found at Asn37 and Asn42. The RxLR-dEER signature appears at 46–63; it reads RSALKTSHGKTIADDEER. In terms of domain architecture, IQ spans 78-107; sequence YKAIVAKLSKYFRDYHERREIRKQRILNKS. Asn105 carries an N-linked (GlcNAc...) asparagine glycan.

It belongs to the RxLR effector family.

The protein localises to the secreted. Its subcellular location is the host Golgi apparatus. In terms of biological role, secreted effector that suppresses pattern-triggered immunity (PTI) in plant host. This is Secreted RxLR effector protein RXLR-C06 from Plasmopara halstedii (Downy mildew of sunflower).